Reading from the N-terminus, the 442-residue chain is uncharacterized protein (442 aa).

The first 23 residues, 1–23 (MEILLIVLGAVVAGLLCPVQTAA), serve as a signal peptide directing secretion. Disordered regions lie at residues 36–67 (TSIS…NSSD) and 91–115 (ANET…TNTR). Residues 48–67 (TSSGELSQSTFSSSSTNSSD) show a composition bias toward low complexity. Asn64, Asn92, Asn99, Asn130, Asn174, Asn225, Asn244, Asn346, Asn363, Asn386, and Asn398 each carry an N-linked (GlcNAc...) asparagine glycan.

The protein resides in the secreted. This is an uncharacterized protein from Arthroderma benhamiae (strain ATCC MYA-4681 / CBS 112371) (Trichophyton mentagrophytes).